A 174-amino-acid polypeptide reads, in one-letter code: Terminase small subunit (174 aa).

It belongs to the skunalikevirus terminase small subunit family.

Functionally, probable terminase small subunit. The terminase lies at a unique vertex of the procapsid and is composed of two subunits, a small terminase subunit and a large terminase subunit. Both terminase subunits heterooligomerize and are docked on the portal protein to form the packaging machine. Once the capsid is packaged with the DNA, the terminase complex is substituted by the connector proteins gp15. The polypeptide is Terminase small subunit (Lactococcus lactis (Lactococcus lactis bacteriophage SK1)).